Reading from the N-terminus, the 283-residue chain is Pseudokinase OPG198 (283 aa).

Positions 1 and 30 each coordinate ATP. The region spanning 1–283 is the Protein kinase domain; it reads MESFKYCFDN…DRLRKLFIQD (283 aa).

The protein belongs to the protein kinase superfamily. Ser/Thr protein kinase family. Poxviruses subfamily. As to quaternary structure, interacts with B1/VPK1. Interacts with host VRK1. Interacts with host VRK2.

It localises to the host nucleus. Its activity is regulated as follows. Both catalytically active kinases B1/VPK1 and host VRK2 repress B12 inhibitory activity in a B1/VPK1 deletion mutant strain. Functionally, pseudokinase that plays a role in viral DNA replication repression by activating the antiviral protein BANF1 and inhibiting the activity of host VRK1, a cellular modulator of BANF1. The sequence is that of Pseudokinase OPG198 (OPG198) from Vaccinia virus (strain Western Reserve) (VACV).